Reading from the N-terminus, the 141-residue chain is MAVQRTFSIIKPDAVAKNVIGKITTRFEDAGLRVVASKLKQLSKAEAEGFYAEHSARGFFGELVAFMTSGPVVVQVLEGENAIARNRELMGATNPKEAAPGTIRADFAESIDANAVHGSDSEAAAAREIAYFFAATEVTTR.

ATP-binding residues include lysine 11, phenylalanine 59, arginine 87, threonine 93, arginine 104, and asparagine 114. The active-site Pros-phosphohistidine intermediate is the histidine 117.

The protein belongs to the NDK family. As to quaternary structure, homotetramer. Mg(2+) serves as cofactor.

Its subcellular location is the cytoplasm. The catalysed reaction is a 2'-deoxyribonucleoside 5'-diphosphate + ATP = a 2'-deoxyribonucleoside 5'-triphosphate + ADP. It carries out the reaction a ribonucleoside 5'-diphosphate + ATP = a ribonucleoside 5'-triphosphate + ADP. Functionally, major role in the synthesis of nucleoside triphosphates other than ATP. The ATP gamma phosphate is transferred to the NDP beta phosphate via a ping-pong mechanism, using a phosphorylated active-site intermediate. This chain is Nucleoside diphosphate kinase, found in Pseudomonas fluorescens (strain Pf0-1).